Here is a 213-residue protein sequence, read N- to C-terminus: Uridine kinase (213 aa).

ATP is bound at residue 15–22; it reads GASASGKS.

This sequence belongs to the uridine kinase family.

Its subcellular location is the cytoplasm. It carries out the reaction uridine + ATP = UMP + ADP + H(+). The enzyme catalyses cytidine + ATP = CMP + ADP + H(+). The protein operates within pyrimidine metabolism; CTP biosynthesis via salvage pathway; CTP from cytidine: step 1/3. Its pathway is pyrimidine metabolism; UMP biosynthesis via salvage pathway; UMP from uridine: step 1/1. In Sodalis glossinidius (strain morsitans), this protein is Uridine kinase.